We begin with the raw amino-acid sequence, 413 residues long: MKYEKLLPRFLEYVKVNTRSDENSTTTPSTQALVEFAHKMGEDMKALGLKDVHYLESNGYVIGTIPANTDKKVRKIGLLAHLDTADFNAEGVNPQILENYDGESVIKLGDTEFTLDPKDFPSLKNYKGQTLVHTDGTTLLGSDDKSGVAEIMTLAEYLLNINPDFEHGEIRVGFGPDEEIGVGADKFDVADFDVDFAYTVDGGPLGELQYETFSAAGAVIEFQGKNVHPGTAKNTMVNALQLAIDYHNALPEFDRPEKTEGREGFFHLLKLDGTPEEARAQYIIRDHEEGKFNERKALMQEIADKMNAEFGQNRVKPVIKDQYYNMAQIIEKDMSIIDIAKKAMENLDIVPIIEPIRGGTDGSKISFMGLPTPNLFAGGENMHGRFEFVSVQTMEKAVDTLLEIIRLNNEVVK.

Residue H81 participates in Zn(2+) binding. D83 is a catalytic residue. D143 lines the Zn(2+) pocket. Residue E178 is the Proton acceptor of the active site. Residues E179, D201, and H383 each coordinate Zn(2+).

Belongs to the peptidase M20B family. Zn(2+) is required as a cofactor.

Its subcellular location is the cytoplasm. It carries out the reaction Release of the N-terminal residue from a tripeptide.. Functionally, cleaves the N-terminal amino acid of tripeptides. The sequence is that of Peptidase T from Lactococcus lactis subsp. hordniae.